The following is a 366-amino-acid chain: Pectinesterase A (366 aa).

The N-terminal stretch at 1-24 (MLKTISGTLALSLIIAASVHQAQA) is a signal peptide. 2 residues coordinate substrate: Thr-109 and Gln-153. Asp-178 functions as the Proton donor in the catalytic mechanism. An intrachain disulfide couples Cys-192 to Cys-212. Asp-199 (nucleophile) is an active-site residue. Positions 219, 226, 230, 267, 269, and 272 each coordinate substrate.

The protein belongs to the pectinesterase family. As to quaternary structure, monomer.

The protein localises to the secreted. The enzyme catalyses [(1-&gt;4)-alpha-D-galacturonosyl methyl ester](n) + n H2O = [(1-&gt;4)-alpha-D-galacturonosyl](n) + n methanol + n H(+). The protein operates within glycan metabolism; pectin degradation; 2-dehydro-3-deoxy-D-gluconate from pectin: step 1/5. Functionally, involved in maceration and soft-rotting of plant tissue. The protein is Pectinesterase A (pemA) of Dickeya chrysanthemi (Pectobacterium chrysanthemi).